A 251-amino-acid chain; its full sequence is 14-3-3-like protein (251 aa).

It belongs to the 14-3-3 family. As to expression, most abundant in roots and flowers.

The protein is 14-3-3-like protein of Nicotiana tabacum (Common tobacco).